We begin with the raw amino-acid sequence, 95 residues long: YcgL domain-containing protein Patl_2802 (95 aa).

The YcgL domain maps to L4–L88.

The chain is YcgL domain-containing protein Patl_2802 from Pseudoalteromonas atlantica (strain T6c / ATCC BAA-1087).